Reading from the N-terminus, the 317-residue chain is Acetyl-coenzyme A carboxylase carboxyl transferase subunit alpha (317 aa).

Residues 41-291 (KVDKLLRSTY…SMALDSALRD (251 aa)) form the CoA carboxyltransferase C-terminal domain.

It belongs to the AccA family. As to quaternary structure, acetyl-CoA carboxylase is a heterohexamer composed of biotin carboxyl carrier protein (AccB), biotin carboxylase (AccC) and two subunits each of ACCase subunit alpha (AccA) and ACCase subunit beta (AccD).

It localises to the cytoplasm. It catalyses the reaction N(6)-carboxybiotinyl-L-lysyl-[protein] + acetyl-CoA = N(6)-biotinyl-L-lysyl-[protein] + malonyl-CoA. It functions in the pathway lipid metabolism; malonyl-CoA biosynthesis; malonyl-CoA from acetyl-CoA: step 1/1. Component of the acetyl coenzyme A carboxylase (ACC) complex. First, biotin carboxylase catalyzes the carboxylation of biotin on its carrier protein (BCCP) and then the CO(2) group is transferred by the carboxyltransferase to acetyl-CoA to form malonyl-CoA. This is Acetyl-coenzyme A carboxylase carboxyl transferase subunit alpha from Paramagnetospirillum magneticum (strain ATCC 700264 / AMB-1) (Magnetospirillum magneticum).